Here is a 331-residue protein sequence, read N- to C-terminus: Heme A synthase (331 aa).

8 helical membrane passes run 6-26, 87-107, 124-144, 154-174, 193-213, 251-271, 279-299, and 301-321; these read VAIW…IGGF, YVHR…FIYF, ALLF…SGLV, LALH…QFFD, IWII…VAGL, VQFI…ILTI, LYVM…TLLL, and IPMA…GSGL. Residue His-255 participates in heme binding. Residue His-309 participates in heme binding.

The protein belongs to the COX15/CtaA family. Type 2 subfamily. In terms of assembly, interacts with CtaB. It depends on heme b as a cofactor.

It is found in the cell membrane. It carries out the reaction Fe(II)-heme o + 2 A + H2O = Fe(II)-heme a + 2 AH2. It participates in porphyrin-containing compound metabolism; heme A biosynthesis; heme A from heme O: step 1/1. Catalyzes the conversion of heme O to heme A by two successive hydroxylations of the methyl group at C8. The first hydroxylation forms heme I, the second hydroxylation results in an unstable dihydroxymethyl group, which spontaneously dehydrates, resulting in the formyl group of heme A. This chain is Heme A synthase, found in Wolbachia pipientis subsp. Culex pipiens (strain wPip).